We begin with the raw amino-acid sequence, 698 residues long: Elongation factor G (698 aa).

The 276-residue stretch at 10-285 folds into the tr-type G domain; that stretch reads DKTRNIGIMA…AVVDYLPSPL (276 aa). GTP contacts are provided by residues 19–26, 83–87, and 137–140; these read AHIDAGKT, DTPGH, and NKMD.

It belongs to the TRAFAC class translation factor GTPase superfamily. Classic translation factor GTPase family. EF-G/EF-2 subfamily.

The protein resides in the cytoplasm. Catalyzes the GTP-dependent ribosomal translocation step during translation elongation. During this step, the ribosome changes from the pre-translocational (PRE) to the post-translocational (POST) state as the newly formed A-site-bound peptidyl-tRNA and P-site-bound deacylated tRNA move to the P and E sites, respectively. Catalyzes the coordinated movement of the two tRNA molecules, the mRNA and conformational changes in the ribosome. This Lactiplantibacillus plantarum (strain ATCC BAA-793 / NCIMB 8826 / WCFS1) (Lactobacillus plantarum) protein is Elongation factor G.